Reading from the N-terminus, the 1829-residue chain is Unconventional myosin-Va (1829 aa).

Residues 8–60 (TKYARVWIPDPEEVWKSAELLKDYKPGDKVLQLRLEEGKDLEYCLDPKTKELP) enclose the Myosin N-terminal SH3-like domain. In terms of domain architecture, Myosin motor spans 69–764 (VGENDLTALS…QVAYLEKIRA (696 aa)). ATP is bound at residue 163–170 (GESGAGKT). Residues 599–635 (AISPTSATPSGRVPLSRTPVKPAKARPGQTSKEHKKT) form a disordered region. Residues 644–666 (LHLLMETLNATTPHYVRCIKPND) are actin-binding. IQ domains are found at residues 767–789 (LRAA…KYMR), 790–814 (MRRA…TFLR), 815–837 (RTRA…RYQC), 838–862 (MRDA…QMML), 863–887 (REHK…HRTL), and 888–915 (KAIV…EARS). 2 coiled-coil regions span residues 916-1239 (VERY…PEVT) and 1315-1419 (GLKE…ELEV). 2 disordered regions span residues 1106 to 1148 (IPKP…SEKK) and 1170 to 1199 (KQSL…PIRG). The span at 1117–1131 (THSSNESEYTFSSEI) shows a compositional bias: polar residues. Composition is skewed to basic and acidic residues over residues 1137 to 1148 (LPLRMEEPSEKK) and 1170 to 1196 (KQSL…ERPP). The region spanning 1508-1784 (TSTINGIKKV…IRTIQLRLRD (277 aa)) is the Dilute domain. Position 1734 is a phosphothreonine (Thr-1734).

The protein belongs to the TRAFAC class myosin-kinesin ATPase superfamily. Myosin family. In terms of assembly, may be a homodimer, which associates with multiple calmodulin or myosin light chains. Neuronal and non-neuronal cells of the brain.

It is found in the golgi apparatus membrane. It carries out the reaction ATP + H2O = ADP + phosphate + H(+). Its function is as follows. Processive actin-based motor that can move in large steps approximating the 36-nm pseudo-repeat of the actin filament. Can hydrolyze ATP in the presence of actin, which is essential for its function as a motor protein. Involved in melanosome transport. Also mediates the transport of vesicles to the plasma membrane. May also be required for some polarization process involved in dendrite formation. The protein is Unconventional myosin-Va (MYO5A) of Gallus gallus (Chicken).